Consider the following 159-residue polypeptide: 2-C-methyl-D-erythritol 2,4-cyclodiphosphate synthase (159 aa).

Residues aspartate 10 and histidine 12 each coordinate a divalent metal cation. 4-CDP-2-C-methyl-D-erythritol 2-phosphate contacts are provided by residues 10-12 and 36-37; these read DVH and HS. Residue histidine 44 coordinates a divalent metal cation. Residues 58 to 60 and arginine 144 each bind 4-CDP-2-C-methyl-D-erythritol 2-phosphate; that span reads DIG.

The protein belongs to the IspF family. Homotrimer. A divalent metal cation is required as a cofactor.

It carries out the reaction 4-CDP-2-C-methyl-D-erythritol 2-phosphate = 2-C-methyl-D-erythritol 2,4-cyclic diphosphate + CMP. It functions in the pathway isoprenoid biosynthesis; isopentenyl diphosphate biosynthesis via DXP pathway; isopentenyl diphosphate from 1-deoxy-D-xylulose 5-phosphate: step 4/6. In terms of biological role, involved in the biosynthesis of isopentenyl diphosphate (IPP) and dimethylallyl diphosphate (DMAPP), two major building blocks of isoprenoid compounds. Catalyzes the conversion of 4-diphosphocytidyl-2-C-methyl-D-erythritol 2-phosphate (CDP-ME2P) to 2-C-methyl-D-erythritol 2,4-cyclodiphosphate (ME-CPP) with a corresponding release of cytidine 5-monophosphate (CMP). The sequence is that of 2-C-methyl-D-erythritol 2,4-cyclodiphosphate synthase from Paraburkholderia phymatum (strain DSM 17167 / CIP 108236 / LMG 21445 / STM815) (Burkholderia phymatum).